Reading from the N-terminus, the 142-residue chain is uncharacterized protein (142 aa).

An N-acetyltransferase domain is found at 1-120 (MADKFDANDE…TILKWEKNMD (120 aa)).

The protein belongs to the acetyltransferase family.

This is an uncharacterized protein from Streptococcus pyogenes serotype M1.